The following is a 206-amino-acid chain: Small ribosomal subunit protein uS4 (206 aa).

The region spanning 96–156 (GRLDNVVYRM…EKAKQQARIK (61 aa)) is the S4 RNA-binding domain.

It belongs to the universal ribosomal protein uS4 family. In terms of assembly, part of the 30S ribosomal subunit. Contacts protein S5. The interaction surface between S4 and S5 is involved in control of translational fidelity.

In terms of biological role, one of the primary rRNA binding proteins, it binds directly to 16S rRNA where it nucleates assembly of the body of the 30S subunit. Functionally, with S5 and S12 plays an important role in translational accuracy. The polypeptide is Small ribosomal subunit protein uS4 (Vibrio campbellii (strain ATCC BAA-1116)).